The sequence spans 546 residues: Amidophosphoribosyltransferase (546 aa).

The segment covering 1–26 (MSAPQQQQQSQQKQQQHVRVVEQQQV) has biased composition (low complexity). The segment at 1–39 (MSAPQQQQQSQQKQQQHVRVVEQQQVEPAEAVTSSMESE) is disordered. Positions 1–53 (MSAPQQQQQSQQKQQQHVRVVEQQQVEPAEAVTSSMESESISASKELTGLTHE) are excised as a propeptide. Catalysis depends on Cys54, which acts as the Nucleophile. The region spanning 54-302 (CGVFGAIACG…PGEIVELSRS (249 aa)) is the Glutamine amidotransferase type-2 domain. Ser113 is subject to Phosphoserine. At Thr114 the chain carries Phosphothreonine. A Phosphoserine modification is found at Ser120. Cys321 serves as a coordination point for [4Fe-4S] cluster. Residues Ser368, Asp430, and Asp431 each coordinate Mg(2+). [4Fe-4S] cluster-binding residues include Cys467, Cys528, and Cys531.

The protein in the C-terminal section; belongs to the purine/pyrimidine phosphoribosyltransferase family. Requires Mg(2+) as cofactor. [4Fe-4S] cluster serves as cofactor.

The catalysed reaction is 5-phospho-beta-D-ribosylamine + L-glutamate + diphosphate = 5-phospho-alpha-D-ribose 1-diphosphate + L-glutamine + H2O. The protein operates within purine metabolism; IMP biosynthesis via de novo pathway; N(1)-(5-phospho-D-ribosyl)glycinamide from 5-phospho-alpha-D-ribose 1-diphosphate: step 1/2. In terms of biological role, involved in the first step (and regulatory point) of the de novo biosynthesis of purine nucleotides, where it catalyzes the transfer of glutamine amide to 5-phospho-alpha-D-ribose 1-diphosphate. This chain is Amidophosphoribosyltransferase (Prat), found in Drosophila melanogaster (Fruit fly).